A 342-amino-acid chain; its full sequence is Ribosomal RNA small subunit methyltransferase C (342 aa).

Belongs to the methyltransferase superfamily. RsmC family. In terms of assembly, monomer.

It is found in the cytoplasm. It catalyses the reaction guanosine(1207) in 16S rRNA + S-adenosyl-L-methionine = N(2)-methylguanosine(1207) in 16S rRNA + S-adenosyl-L-homocysteine + H(+). In terms of biological role, specifically methylates the guanine in position 1207 of 16S rRNA in the 30S particle. This chain is Ribosomal RNA small subunit methyltransferase C, found in Salmonella enteritidis PT4 (strain P125109).